The chain runs to 317 residues: Methionyl-tRNA formyltransferase (317 aa).

117–120 (SLLP) is a (6S)-5,6,7,8-tetrahydrofolate binding site.

Belongs to the Fmt family.

The enzyme catalyses L-methionyl-tRNA(fMet) + (6R)-10-formyltetrahydrofolate = N-formyl-L-methionyl-tRNA(fMet) + (6S)-5,6,7,8-tetrahydrofolate + H(+). Functionally, attaches a formyl group to the free amino group of methionyl-tRNA(fMet). The formyl group appears to play a dual role in the initiator identity of N-formylmethionyl-tRNA by promoting its recognition by IF2 and preventing the misappropriation of this tRNA by the elongation apparatus. The chain is Methionyl-tRNA formyltransferase from Herminiimonas arsenicoxydans.